A 1381-amino-acid polypeptide reads, in one-letter code: Hepatocyte growth factor receptor (1381 aa).

An N-terminal signal peptide occupies residues 1–24; sequence MKAPAVLAPGILVLLFTLVQRSNG. Residues 25 to 934 lie on the Extracellular side of the membrane; that stretch reads ECKEALTKSE…VQPDQNFTGL (910 aa). The 489-residue stretch at 27-515 folds into the Sema domain; that stretch reads KEALTKSEMN…TGKKITKIPL (489 aa). Asn45 carries N-linked (GlcNAc...) asparagine glycosylation. 4 cysteine pairs are disulfide-bonded: Cys95-Cys101, Cys98-Cys160, Cys133-Cys141, and Cys172-Cys175. N-linked (GlcNAc...) asparagine glycosylation occurs at Asn106. A glycan (N-linked (GlcNAc...) asparagine) is linked at Asn149. Asn202 carries an N-linked (GlcNAc...) asparagine glycan. Cystine bridges form between Cys298-Cys363 and Cys385-Cys397. Asn399 carries an N-linked (GlcNAc...) asparagine glycan. 4 disulfides stabilise this stretch: Cys520/Cys538, Cys526/Cys561, Cys529/Cys545, and Cys541/Cys551. IPT/TIG domains are found at residues 563–655, 657–739, and 742–836; these read PTIY…FSYV, PIIT…FSYR, and PIVY…LIYV. O-linked (Man) threonine glycosylation is present at Thr582. N-linked (GlcNAc...) asparagine glycans are attached at residues Asn607 and Asn635. Thr676 and Thr761 each carry an O-linked (Man) threonine glycan. Asn785, Asn879, and Asn930 each carry an N-linked (GlcNAc...) asparagine glycan. A helical membrane pass occupies residues 935–955; sequence VAGVVSISIALLLLLGLFLWL. Over 956–1381 the chain is Cytoplasmic; the sequence is KKKKQIKDLG…QDNTDGEVDT (426 aa). At Ser966 the chain carries Phosphoserine. Thr977 carries the post-translational modification Phosphothreonine. 3 positions are modified to phosphoserine: Ser990, Ser997, and Ser1000. A Phosphotyrosine modification is found at Tyr1003. A Protein kinase domain is found at 1078-1345; it reads VHFNEVIGRG…RISAIFSTFI (268 aa). Residues 1084-1092 and Lys1110 each bind ATP; that span reads IGRGHFGCV. The Proton acceptor role is filled by Asp1204. Residues 1212 to 1381 are interaction with RANBP9; the sequence is LDEKFTVKVA…QDNTDGEVDT (170 aa). At Tyr1230 the chain carries Phosphotyrosine. Residues Tyr1234 and Tyr1235 each carry the phosphotyrosine; by autocatalysis modification. At Thr1289 the chain carries Phosphothreonine. Residues 1320–1359 form an interaction with MUC20 region; sequence WHPKAEMRPSFSELVSRISAIFSTFIGEHYVHVNATYVNV. 2 positions are modified to phosphotyrosine; by autocatalysis: Tyr1349 and Tyr1356. Tyr1365 is modified (phosphotyrosine).

Belongs to the protein kinase superfamily. Tyr protein kinase family. As to quaternary structure, heterodimer made of an alpha chain (50 kDa) and a beta chain (145 kDa) which are disulfide linked. Binds PLXNB1. Interacts when phosphorylated with downstream effectors including STAT3, PIK3R1, SRC, PCLG1, GRB2 and GAB1. Interacts with SPSB1, SPSB2 and SPSB4. Interacts with INPP5D/SHIP1. When phosphorylated at Tyr-1356, interacts with INPPL1/SHIP2. Interacts with RANBP9 and RANBP10, as well as SPSB1, SPSB2, SPSB3 and SPSB4. SPSB1 binding occurs in the presence and in the absence of HGF, however HGF treatment has a positive effect on this interaction. Interacts with MUC20; prevents interaction with GRB2 and suppresses hepatocyte growth factor-induced cell proliferation. Interacts with GRB10. Interacts with PTPN1 and PTPN2. Interacts with HSP90AA1 and HSP90AB1; the interaction suppresses MET kinase activity. Interacts with tensin TNS3. Interacts (when phosphorylated) with tensin TNS4 (via SH2 domain); the interaction increases MET protein stability by inhibiting MET endocytosis and subsequent lysosomal degradation. Autophosphorylated in response to ligand binding on Tyr-1234 and Tyr-1235 in the kinase domain leading to further phosphorylation of Tyr-1349 and Tyr-1356 in the C-terminal multifunctional docking site. Dephosphorylated by PTPRJ at Tyr-1349 and Tyr-1365. Dephosphorylated by PTPN1 and PTPN2. In terms of processing, ubiquitinated. Ubiquitination by CBL regulates the receptor stability and activity through proteasomal degradation. Post-translationally, O-mannosylation of IPT/TIG domains by TMEM260 is required for protein maturation. O-mannosylated residues are composed of single mannose glycans that are not elongated or modified.

The protein resides in the membrane. It carries out the reaction L-tyrosyl-[protein] + ATP = O-phospho-L-tyrosyl-[protein] + ADP + H(+). Functionally, receptor tyrosine kinase that transduces signals from the extracellular matrix into the cytoplasm by binding to hepatocyte growth factor/HGF ligand. Regulates many physiological processes including proliferation, scattering, morphogenesis and survival. Ligand binding at the cell surface induces autophosphorylation of MET on its intracellular domain that provides docking sites for downstream signaling molecules. Following activation by ligand, interacts with the PI3-kinase subunit PIK3R1, PLCG1, SRC, GRB2, STAT3 or the adapter GAB1. Recruitment of these downstream effectors by MET leads to the activation of several signaling cascades including the RAS-ERK, PI3 kinase-AKT, or PLCgamma-PKC. The RAS-ERK activation is associated with the morphogenetic effects while PI3K/AKT coordinates prosurvival effects. During embryonic development, MET signaling plays a role in gastrulation, development and migration of muscles and neuronal precursors, angiogenesis and kidney formation. In adults, participates in wound healing as well as organ regeneration and tissue remodeling. Also promotes differentiation and proliferation of hematopoietic cells. The sequence is that of Hepatocyte growth factor receptor (MET) from Callithrix jacchus (White-tufted-ear marmoset).